A 234-amino-acid polypeptide reads, in one-letter code: Nuclear transcription factor Y subunit C-1 (234 aa).

Disordered stretches follow at residues 1 to 20 and 205 to 234; these read MDTN…PPPP and SVWQ…DGQG. Over residues 7 to 20 the composition is skewed to pro residues; the sequence is QPPPSAAGIPPPPP. Positions 209-219 are enriched in low complexity; it reads TSTGTGDDVSY. Residues 220 to 234 show a composition bias toward gly residues; it reads GSGGSSGQGNLDGQG.

The protein belongs to the NFYC/HAP5 subunit family. In terms of assembly, heterotrimeric transcription factor composed of three components, NF-YA, NF-YB and NF-YC. NF-YB and NF-YC must interact and dimerize for NF-YA association and DNA binding. Ubiquitous. Present in etiolated seedlings.

The protein resides in the nucleus. Functionally, stimulates the transcription of various genes by recognizing and binding to a CCAAT motif in promoters. This Arabidopsis thaliana (Mouse-ear cress) protein is Nuclear transcription factor Y subunit C-1 (NFYC1).